We begin with the raw amino-acid sequence, 323 residues long: Sphingolipid delta(4)-desaturase DES1 (323 aa).

Gly2 is lipidated: N-myristoyl glycine. The next 2 helical transmembrane spans lie at 41 to 61 (PNLIWIIIMMVLTQLGAFYIV) and 68 to 88 (WVIFGAYAFGSCINHSMTLAI). The Histidine box-1 motif lies at 89 to 93 (HEIAH). Residues 102–122 (AMWNRWFGMFANLPIGIPYSI) form a helical membrane-spanning segment. The Histidine box-2 motif lies at 128 to 132 (HMDHH). The next 3 membrane-spanning stretches (helical) occupy residues 152-172 (FFCTAFRKFIWVILQPLFYAF), 184-204 (YLEVINTVAQVTFDILIYYFL), and 209-229 (LVYMLAASLLGLGLHPISGHF). A Histidine box-3 motif is present at residues 259-263 (HNEHH). The residue at position 307 (Ser307) is a Phosphoserine.

Belongs to the fatty acid desaturase type 1 family. DEGS subfamily. In terms of assembly, interacts with RLBP1; the interaction increases synthesis of chromophore-precursors by DEGS1. Post-translationally, myristoylation can target the enzyme to the mitochondria leading to an increase in ceramide levels. As to expression, ubiquitous.

The protein resides in the mitochondrion membrane. It is found in the endoplasmic reticulum membrane. The enzyme catalyses an N-acylsphinganine + 2 Fe(II)-[cytochrome b5] + O2 + 2 H(+) = an N-acylsphing-4-enine + 2 Fe(III)-[cytochrome b5] + 2 H2O. It catalyses the reaction all-trans-retinol = 11-cis-retinol. The catalysed reaction is all-trans-retinol = 9-cis-retinol. It carries out the reaction all-trans-retinol = 13-cis-retinol. The enzyme catalyses 11-cis-retinol = 13-cis-retinol. It catalyses the reaction 11-cis-retinol = 9-cis-retinol. Functionally, has sphingolipid-delta-4-desaturase activity. Converts D-erythro-sphinganine to D-erythro-sphingosine (E-sphing-4-enine). Catalyzes the equilibrium isomerization of retinols. The protein is Sphingolipid delta(4)-desaturase DES1 of Homo sapiens (Human).